The chain runs to 265 residues: Silencing boundary-establishment protein FUB1-like protein (265 aa).

Residues 194–265 (HPENRSRNEQ…MPPGSSDMFM (72 aa)) are disordered.

The protein belongs to the proteasome inhibitor PI31 family. In terms of assembly, interacts with the 20S proteasome.

The protein localises to the cytoplasm. Its subcellular location is the nucleus. May play a role in the establishment of transcriptional silencing boundaries, preventing the propagation of heterochromatic silencing. This Schizosaccharomyces pombe (strain 972 / ATCC 24843) (Fission yeast) protein is Silencing boundary-establishment protein FUB1-like protein.